The following is a 669-amino-acid chain: DNA ligase (669 aa).

Residues 34-38, 83-84, and Glu114 each bind NAD(+); these read DAEYD and SL. Catalysis depends on Lys116, which acts as the N6-AMP-lysine intermediate. 4 residues coordinate NAD(+): Arg137, Glu171, Lys287, and Lys311. Residues Cys405, Cys408, Cys423, and Cys428 each contribute to the Zn(2+) site. The region spanning 591–669 is the BRCT domain; sequence NVESYFAGKT…EERFLQELNK (79 aa).

The protein belongs to the NAD-dependent DNA ligase family. LigA subfamily. Mg(2+) is required as a cofactor. Requires Mn(2+) as cofactor.

The catalysed reaction is NAD(+) + (deoxyribonucleotide)n-3'-hydroxyl + 5'-phospho-(deoxyribonucleotide)m = (deoxyribonucleotide)n+m + AMP + beta-nicotinamide D-nucleotide.. Functionally, DNA ligase that catalyzes the formation of phosphodiester linkages between 5'-phosphoryl and 3'-hydroxyl groups in double-stranded DNA using NAD as a coenzyme and as the energy source for the reaction. It is essential for DNA replication and repair of damaged DNA. The sequence is that of DNA ligase from Bacillus cereus (strain G9842).